The sequence spans 396 residues: Elongation factor Tu (396 aa).

In terms of domain architecture, tr-type G spans 10 to 206 (KPHVNIGTIG…ACDTYIPAPV (197 aa)). The tract at residues 19–26 (GHVDHGKT) is G1. Residue 19-26 (GHVDHGKT) participates in GTP binding. Thr-26 serves as a coordination point for Mg(2+). Residues 60-64 (GITIS) form a G2 region. The segment at 81-84 (DCPG) is G3. GTP-binding positions include 81–85 (DCPGH) and 136–139 (NKVD). Residues 136–139 (NKVD) are G4. A G5 region spans residues 174-176 (SAL).

The protein belongs to the TRAFAC class translation factor GTPase superfamily. Classic translation factor GTPase family. EF-Tu/EF-1A subfamily. As to quaternary structure, monomer.

Its subcellular location is the cytoplasm. The catalysed reaction is GTP + H2O = GDP + phosphate + H(+). In terms of biological role, GTP hydrolase that promotes the GTP-dependent binding of aminoacyl-tRNA to the A-site of ribosomes during protein biosynthesis. The sequence is that of Elongation factor Tu from Bdellovibrio bacteriovorus (strain ATCC 15356 / DSM 50701 / NCIMB 9529 / HD100).